The primary structure comprises 441 residues: Queuine tRNA-ribosyltransferase accessory subunit 2 (441 aa).

Zn(2+) contacts are provided by Cys-307, Cys-309, Cys-312, and His-338.

The protein belongs to the queuine tRNA-ribosyltransferase family. QTRT2 subfamily. Heterodimer of a catalytic subunit and an accessory subunit. It depends on Zn(2+) as a cofactor.

The protein resides in the cytoplasm. Non-catalytic subunit of the queuine tRNA-ribosyltransferase (TGT) that catalyzes the base-exchange of a guanine (G) residue with queuine (Q) at position 34 (anticodon wobble position) in tRNAs with GU(N) anticodons (tRNA-Asp, -Asn, -His and -Tyr), resulting in the hypermodified nucleoside queuosine (7-(((4,5-cis-dihydroxy-2-cyclopenten-1-yl)amino)methyl)-7-deazaguanosine). This chain is Queuine tRNA-ribosyltransferase accessory subunit 2 (qtr2), found in Schizosaccharomyces pombe (strain 972 / ATCC 24843) (Fission yeast).